A 235-amino-acid chain; its full sequence is Secretory carrier-associated membrane protein 5B (235 aa).

Topologically, residues 1–39 are cytoplasmic; that stretch reads MSDKPNNFPPLPRFIPLKPCFYQDFDTDIPDVHRTTAKR. Residues 40 to 60 traverse the membrane as a helical segment; that stretch reads LYYLWMLNSITLGVNLIGCLA. At 61-67 the chain is on the extracellular side; sequence WLIGGGG. The helical transmembrane segment at 68–88 threads the bilayer; that stretch reads ATNFGLAFLWLILFTPCSYVC. Residues 89-102 lie on the Cytoplasmic side of the membrane; it reads WFRPIYKAFKTDSS. Residues 103–125 traverse the membrane as a helical segment; sequence FNFMAFFFTFTGQLVISIIQAVG. The Extracellular segment spans residues 126 to 148; the sequence is IPGWGVCGWIASISFFGTNVGSA. The helical transmembrane segment at 149-169 threads the bilayer; it reads VVMLIPTIMFTAVAVLSFVAL. Topologically, residues 170 to 235 are cytoplasmic; sequence TKVHRFYRGA…TPNYGYSNQM (66 aa).

The protein belongs to the SCAMP family. SCAMP5 subfamily.

The protein resides in the cell membrane. It localises to the golgi apparatus membrane. It is found in the golgi apparatus. Its subcellular location is the trans-Golgi network membrane. The protein localises to the recycling endosome membrane. The protein resides in the cytoplasmic vesicle. It localises to the secretory vesicle. It is found in the synaptic vesicle membrane. Required for the calcium-dependent exocytosis of signal sequence-containing cytokines. Probably acts in cooperation with the SNARE machinery. The chain is Secretory carrier-associated membrane protein 5B (scamp5-b) from Xenopus laevis (African clawed frog).